We begin with the raw amino-acid sequence, 1424 residues long: MEDQGHLPSEPRALFDRRDDTDSTNTALDETDLSRTPLQDTSHTPHAEDWSLMPDLKKQHDRNVASGFRRRELGVTWKNLSVDVVSADAAINENVLSQFNIPQHIRESRNKAPLRTILHESHGCVKPGEMLLVLGRPGSGCTTLLRMLSNHRLGYKAIRGDVRFGSLTPEEASKYRGQIVMNTEEELFFPTLTVAQTLDFATRLKVPFNLPDGVTSPEAFRQETREFLLKSMGISHTSDTKVGNEYVRGVSGGERKRVSIIECLATRGSVFCWDNSTRGLDASTALEWAKAVRAMTDVFGLSSIVTLYQAGNGIYDLFDKVLVLDEGKQIYYGPMSQARPFMEEQGFVCREGSNVADFLTGVTVPTERKIRPGYENRFPRNADELLAAYEKSPIRAQMAIEYDYPDTESTRERTEEFKLGVLDEKAKRLSKNSPFTVDFLQQVKACIIRQYQIIWTDKATFAIKQISTVIQALVAGSLFYNAPDNSGGLFIKSGALFFSLLYNSLLAMSEVTDSFSGRPVLIKHKYFAFFHPAAFCIAQIAADIPVLLFQISMFAVVVYFMVGLTTSAGAFFSYWIIIFVATMVMTALFRAIGALFSTFDGASKVSGFLISALIMYCGYLEPYHAMHPWFIWIYWINPLAYAFDALLSIEFHNKIIPCVGNNLVPFGPGYDDTTFQSCAGVGGAVRGMTYVTGDQYLASLTYSYSHVWRNFGILWAWWALFVAVTIIATSRWKSAAEAGNSLLIPRETVAKHHAVVRKDEEAQLNEKAGHKGTGTDSEAQSNVDQHLVRNTSVFTWKNLTYTVKTPSGDRVLLDNVYGWVKPGMLGALMGSSGAGKTTLLDVLAQRKTDGTIRGSIMVDGRPLPVSFQRSAGYCEQLDVHEPFATVREALEFSALLRQPRHIPREEKLKYVDVIIDLLELHDLEHTLIGRVGAGLSVEQRKRVTIGVELVSKPSILIFLDEPTSGLDGQSAFNTVRFLRKLADVGQAVLVTIHQPSAQLFAEFDTLLLLAKGGKMVYFGDIGDNAQTVKDYFARYGAPCPANVNPAEHMIDVVSGHLSQGRDWNQVWLESPEHSSASRELDSIISEAASKPPGTVDDGYEFAMPLWEQTKIVTQRMSTSLYRNCDYIMNKIALHIGSALFNGFSFWMIGDSVADMQLKLFTIFNFIFVAPGVINQLQPLFIERRDIYDAREKKSKMYSWVAFVTALIVSEFPYLCVCAVLYFVCWYYTVGFPSDSDKAGAIFFIMLCYEFLYTGIGQFIAAYAPNATFAALTNPLILGTLVSFCGVLVPYAQIQAFWRYWIYWLNPFNYLMGSMLVFSVFDTDVKCKEGEFAVFDTPNGTTCADYLSTYLQGVGSRANLVNPEATSGCRVCQYRYGSDYLYTINLKDYYYGWRDTAIVCIFVLSSYALVYALMKLRTKASKKAE.

The tract at residues 1–49 (MEDQGHLPSEPRALFDRRDDTDSTNTALDETDLSRTPLQDTSHTPHAED) is disordered. The segment covering 23–42 (STNTALDETDLSRTPLQDTS) has biased composition (polar residues). N-linked (GlcNAc...) asparagine glycosylation is found at N79 and N275. In terms of domain architecture, ABC transporter 1 spans 96–351 (LSQFNIPQHI…MEEQGFVCRE (256 aa)). Helical transmembrane passes span 488–508 (GLFI…LLAM), 520–540 (VLIK…IAQI), 544–564 (IPVL…MVGL), 569–589 (GAFF…TALF), 605–625 (VSGF…PYHA), 629–649 (WFIW…LLSI), and 710–730 (NFGI…IATS). Positions 760–782 (EEAQLNEKAGHKGTGTDSEAQSN) are disordered. Residues N790 and N798 are each glycosylated (N-linked (GlcNAc...) asparagine). The region spanning 794-1037 (FTWKNLTYTV…VKDYFARYGA (244 aa)) is the ABC transporter 2 domain. Residue 830–837 (GSSGAGKT) participates in ATP binding. Helical transmembrane passes span 1131-1151 (IALH…IGDS), 1161-1181 (TIFN…PLFI), 1200-1220 (VAFV…CAVL), and 1240-1260 (AIFF…QFIA). An N-linked (GlcNAc...) asparagine glycan is attached at N1265. 2 helical membrane passes run 1268-1288 (FAAL…GVLV) and 1300-1320 (WIYW…FSVF). N-linked (GlcNAc...) asparagine glycosylation is present at N1338. Residues 1395–1415 (TAIVCIFVLSSYALVYALMKL) traverse the membrane as a helical segment.

It belongs to the ABC transporter superfamily. ABCG family. PDR (TC 3.A.1.205) subfamily.

The protein localises to the cell membrane. The efflux inhibitor FK506 impairs the transport activity. Functionally, ABC efflux transporter that is able to transport rhodamine 6G (R-6G), a known substrate for many ABC transporters, but seems not to transport azoles. This chain is ABC multidrug transporter H, found in Aspergillus fumigatus (strain ATCC MYA-4609 / CBS 101355 / FGSC A1100 / Af293) (Neosartorya fumigata).